Consider the following 151-residue polypeptide: Small ribosomal subunit protein uS15 (151 aa).

This sequence belongs to the universal ribosomal protein uS15 family. Component of the small ribosomal subunit.

The protein resides in the cytoplasm. Functionally, component of the small ribosomal subunit. The ribosome is a large ribonucleoprotein complex responsible for the synthesis of proteins in the cell. This chain is Small ribosomal subunit protein uS15 (rps13), found in Gillichthys mirabilis (Long-jawed mudsucker).